A 22-amino-acid chain; its full sequence is NADH-ubiquinone oxidoreductase 16 kDa subunit (22 aa).

As to quaternary structure, complex I is composed of about 45 different subunits.

It localises to the mitochondrion inner membrane. The enzyme catalyses a ubiquinone + NADH + 5 H(+)(in) = a ubiquinol + NAD(+) + 4 H(+)(out). Its function is as follows. Transfer of electrons from NADH to the respiratory chain. The immediate electron acceptor for the enzyme is believed to be ubiquinone. This Solanum tuberosum (Potato) protein is NADH-ubiquinone oxidoreductase 16 kDa subunit.